The sequence spans 132 residues: MPAQISSEDQQLSTKIAERLKRDEAGLVAAVVQQFDSKEVLMLGWMDDEALRRTLRSGRVTFFSRSRQEYWRKGDTSGHIQMVKAVALDCDGDALLISVDQHGPACHTGTRSCFDGRALPAFVEPVFVEPVA.

Position 89 (D89) interacts with Mg(2+). C90 provides a ligand contact to Zn(2+). The Mg(2+) site is built by D91 and D93. Positions 106 and 113 each coordinate Zn(2+).

The protein belongs to the PRA-CH family. Homodimer. It depends on Mg(2+) as a cofactor. The cofactor is Zn(2+).

The protein localises to the cytoplasm. The enzyme catalyses 1-(5-phospho-beta-D-ribosyl)-5'-AMP + H2O = 1-(5-phospho-beta-D-ribosyl)-5-[(5-phospho-beta-D-ribosylamino)methylideneamino]imidazole-4-carboxamide. The protein operates within amino-acid biosynthesis; L-histidine biosynthesis; L-histidine from 5-phospho-alpha-D-ribose 1-diphosphate: step 3/9. Functionally, catalyzes the hydrolysis of the adenine ring of phosphoribosyl-AMP. This chain is Phosphoribosyl-AMP cyclohydrolase, found in Renibacterium salmoninarum (strain ATCC 33209 / DSM 20767 / JCM 11484 / NBRC 15589 / NCIMB 2235).